A 697-amino-acid polypeptide reads, in one-letter code: Protein Niban 3 (697 aa).

Residues 1 to 48 (MGPDRKEVPLSRGTQAVVVGKGRGAPGDDSSMGGRPSSPLDKQQRQHL) form a disordered region.

The protein belongs to the Niban family. Specifically expressed in B-lymphocytes.

The polypeptide is Protein Niban 3 (Homo sapiens (Human)).